A 259-amino-acid polypeptide reads, in one-letter code: Alpha-acetolactate decarboxylase (259 aa).

Belongs to the alpha-acetolactate decarboxylase family.

It catalyses the reaction (2S)-2-acetolactate + H(+) = (R)-acetoin + CO2. Its pathway is polyol metabolism; (R,R)-butane-2,3-diol biosynthesis; (R,R)-butane-2,3-diol from pyruvate: step 2/3. Its function is as follows. Converts acetolactate into acetoin, which can be excreted by the cells. This may be a mechanism for controlling the internal pH of cells in the stationary stage. The polypeptide is Alpha-acetolactate decarboxylase (budA) (Raoultella terrigena (Klebsiella terrigena)).